The sequence spans 292 residues: Acetylglutamate kinase (292 aa).

Substrate is bound by residues 64–65 (GG), R86, and N190.

It belongs to the acetylglutamate kinase family. ArgB subfamily.

The protein resides in the cytoplasm. The catalysed reaction is N-acetyl-L-glutamate + ATP = N-acetyl-L-glutamyl 5-phosphate + ADP. It functions in the pathway amino-acid biosynthesis; L-arginine biosynthesis; N(2)-acetyl-L-ornithine from L-glutamate: step 2/4. Catalyzes the ATP-dependent phosphorylation of N-acetyl-L-glutamate. This chain is Acetylglutamate kinase, found in Trichlorobacter lovleyi (strain ATCC BAA-1151 / DSM 17278 / SZ) (Geobacter lovleyi).